Here is a 245-residue protein sequence, read N- to C-terminus: uncharacterized protein (245 aa).

An HTH gntR-type domain is found at 29-96 (RSLIEATFQR…AQRGFHVTPM (68 aa)). The H-T-H motif DNA-binding region spans 56-75 (IEDLKSRYEVSGGTVREALS).

This is an uncharacterized protein from Paraburkholderia xenovorans (strain LB400).